The primary structure comprises 190 residues: Large ribosomal subunit protein uL5 (190 aa).

The protein belongs to the universal ribosomal protein uL5 family. In terms of assembly, part of the 50S ribosomal subunit; part of the 5S rRNA/L5/L18/L25 subcomplex. Contacts the 5S rRNA and the P site tRNA. Forms a bridge to the 30S subunit in the 70S ribosome.

Its function is as follows. This is one of the proteins that bind and probably mediate the attachment of the 5S RNA into the large ribosomal subunit, where it forms part of the central protuberance. In the 70S ribosome it contacts protein S13 of the 30S subunit (bridge B1b), connecting the 2 subunits; this bridge is implicated in subunit movement. Contacts the P site tRNA; the 5S rRNA and some of its associated proteins might help stabilize positioning of ribosome-bound tRNAs. In Bifidobacterium adolescentis (strain ATCC 15703 / DSM 20083 / NCTC 11814 / E194a), this protein is Large ribosomal subunit protein uL5.